We begin with the raw amino-acid sequence, 175 residues long: Apoptosis regulator Bcl-2 homolog (175 aa).

Residues 152 to 174 form a helical membrane-spanning segment; sequence YYVTRYFRVAAFIITSLAVINLF.

In terms of assembly, interacts with host BAK1 and BAX as well as other BH3-containing proteins including BIM, BID or PUMA.

Its subcellular location is the host membrane. Plays a role in the inhibition of host apoptosis. Interacts with host proapoptotic factors BAK1 and BAX to supposedly prevent their activation. The protein is Apoptosis regulator Bcl-2 homolog (CNPV058) of Canarypox virus (CNPV).